A 247-amino-acid chain; its full sequence is Probable proteasome subunit alpha type-5 (247 aa).

The residue at position 55 (T55) is a Phosphothreonine.

It belongs to the peptidase T1A family. As to quaternary structure, the 26S proteasome consists of a 20S proteasome core and two 19S regulatory subunits. The 20S proteasome core is composed of 28 subunits that are arranged in four stacked rings, resulting in a barrel-shaped structure. The two end rings are each formed by seven alpha subunits, and the two central rings are each formed by seven beta subunits. The catalytic chamber with the active sites is on the inside of the barrel.

It is found in the cytoplasm. Its subcellular location is the nucleus. Functionally, the proteasome is a multicatalytic proteinase complex which is characterized by its ability to cleave peptides with Arg, Phe, Tyr, Leu, and Glu adjacent to the leaving group at neutral or slightly basic pH. The proteasome has an ATP-dependent proteolytic activity. This Schizosaccharomyces pombe (strain 972 / ATCC 24843) (Fission yeast) protein is Probable proteasome subunit alpha type-5 (pup2).